The sequence spans 397 residues: Lysophospholipid transporter LplT (397 aa).

The Periplasmic segment spans residues 1–17 (MSESVHTNTSLWSKGMK). The chain crosses the membrane as a helical span at residues 18–38 (AVIVAQFLSAFGDNALLFATL). Over 39-52 (ALLKAQFYPEWSQP) the chain is Cytoplasmic. Residues 53 to 73 (ILQMVFVGAYILFAPFVGQVA) traverse the membrane as a helical segment. At 74-90 (DSFAKGRVMMFANGLKL) the chain is on the periplasmic side. A helical membrane pass occupies residues 91–111 (LGAASICFGINPFLGYTLVGV). At 112–144 (GAAAYSPAKYGILGELTTGSKLVKANGLMEAST) the chain is on the cytoplasmic side. A helical membrane pass occupies residues 145–165 (IAAILLGSVAGGVLADWHVLV). Position 166 (Ala166) is a topological domain, periplasmic. The chain crosses the membrane as a helical span at residues 167–187 (LAACALAYGGAVVANIYIPKL). The Cytoplasmic portion of the chain corresponds to 188–226 (AAARPGQSWNLINMTRSFLNACTSLWRNGETRFSLVGTS). A helical membrane pass occupies residues 227–247 (LFWGAGVTLRFLLVLWVPVAL). The Periplasmic portion of the chain corresponds to 248–256 (GITDNATPT). The helical transmembrane segment at 257–277 (YLNAMVAIGIVVGAGAAAKLV) threads the bilayer. The Cytoplasmic segment spans residues 278 to 280 (TLE). A helical membrane pass occupies residues 281 to 301 (TVSRCMPAGILIGVVVLIFSL). Topologically, residues 302–304 (QHE) are periplasmic. Residues 305–325 (LLPAYALLMLIGVLGGFFVVP) form a helical membrane-spanning segment. At 326–343 (LNALLQERGKKSVGAGNA) the chain is on the cytoplasmic side. Residues 344-364 (IAVQNLGENSAMLLMLGIYSL) traverse the membrane as a helical segment. Topologically, residues 365–366 (AV) are periplasmic. The helical transmembrane segment at 367-387 (MVGIPVVPIGIGFGTLFALAI) threads the bilayer. Residues 388–397 (TALWIWQRRH) are Cytoplasmic-facing.

This sequence belongs to the major facilitator superfamily. LplT (TC 2.A.1.42) family.

It localises to the cell inner membrane. Its function is as follows. Catalyzes the facilitated diffusion of 2-acyl-glycero-3-phosphoethanolamine (2-acyl-GPE) into the cell. In Escherichia coli O9:H4 (strain HS), this protein is Lysophospholipid transporter LplT.